A 359-amino-acid polypeptide reads, in one-letter code: Probable dual-specificity RNA methyltransferase RlmN (359 aa).

E100 functions as the Proton acceptor in the catalytic mechanism. In terms of domain architecture, Radical SAM core spans 106-340 (TDKRLTVCVS…VSVRASRGRD (235 aa)). C113 and C345 are disulfide-bonded. [4Fe-4S] cluster-binding residues include C120, C124, and C127. S-adenosyl-L-methionine-binding positions include 167–168 (GE), S197, 226–228 (SLH), and N302. The S-methylcysteine intermediate role is filled by C345.

The protein belongs to the radical SAM superfamily. RlmN family. The cofactor is [4Fe-4S] cluster.

It localises to the cytoplasm. The catalysed reaction is adenosine(2503) in 23S rRNA + 2 reduced [2Fe-2S]-[ferredoxin] + 2 S-adenosyl-L-methionine = 2-methyladenosine(2503) in 23S rRNA + 5'-deoxyadenosine + L-methionine + 2 oxidized [2Fe-2S]-[ferredoxin] + S-adenosyl-L-homocysteine. It catalyses the reaction adenosine(37) in tRNA + 2 reduced [2Fe-2S]-[ferredoxin] + 2 S-adenosyl-L-methionine = 2-methyladenosine(37) in tRNA + 5'-deoxyadenosine + L-methionine + 2 oxidized [2Fe-2S]-[ferredoxin] + S-adenosyl-L-homocysteine. Specifically methylates position 2 of adenine 2503 in 23S rRNA and position 2 of adenine 37 in tRNAs. In Prochlorococcus marinus (strain NATL1A), this protein is Probable dual-specificity RNA methyltransferase RlmN.